The primary structure comprises 136 residues: Protein NrdI (136 aa).

This sequence belongs to the NrdI family.

In terms of biological role, probably involved in ribonucleotide reductase function. The protein is Protein NrdI of Escherichia coli (strain 55989 / EAEC).